The chain runs to 113 residues: Putative glycerol transporter Lin0367 (113 aa).

The next 4 membrane-spanning stretches (helical) occupy residues 3–23 (IGIALATIAGGFLFPFAIRMM), 30–50 (EWGAIGGWMAAAFIVGTVWTI), 63–83 (GTVWVDMAVAAGIGVFTASLL), and 92–112 (VVNLAAAVVGGVLGGFLLSLF).

The protein resides in the membrane. Could be involved in the glycerol uptake either via facilitated diffusion or active transport. The protein is Putative glycerol transporter Lin0367 of Listeria innocua serovar 6a (strain ATCC BAA-680 / CLIP 11262).